We begin with the raw amino-acid sequence, 156 residues long: Small ribosomal subunit protein uS7 (156 aa).

It belongs to the universal ribosomal protein uS7 family. As to quaternary structure, part of the 30S ribosomal subunit. Contacts proteins S9 and S11.

One of the primary rRNA binding proteins, it binds directly to 16S rRNA where it nucleates assembly of the head domain of the 30S subunit. Is located at the subunit interface close to the decoding center, probably blocks exit of the E-site tRNA. In Syntrophobacter fumaroxidans (strain DSM 10017 / MPOB), this protein is Small ribosomal subunit protein uS7.